Here is a 366-residue protein sequence, read N- to C-terminus: NADH-quinone oxidoreductase subunit D (366 aa).

It belongs to the complex I 49 kDa subunit family. NDH-1 is composed of 14 different subunits. Subunits NuoB, C, D, E, F, and G constitute the peripheral sector of the complex.

Its subcellular location is the cell membrane. It catalyses the reaction a quinone + NADH + 5 H(+)(in) = a quinol + NAD(+) + 4 H(+)(out). Its function is as follows. NDH-1 shuttles electrons from NADH, via FMN and iron-sulfur (Fe-S) centers, to quinones in the respiratory chain. The immediate electron acceptor for the enzyme in this species is believed to be a menaquinone. Couples the redox reaction to proton translocation (for every two electrons transferred, four hydrogen ions are translocated across the cytoplasmic membrane), and thus conserves the redox energy in a proton gradient. This is NADH-quinone oxidoreductase subunit D from Bacillus cereus (strain ATCC 14579 / DSM 31 / CCUG 7414 / JCM 2152 / NBRC 15305 / NCIMB 9373 / NCTC 2599 / NRRL B-3711).